Here is a 381-residue protein sequence, read N- to C-terminus: Ubiquitin-associated protein 1-like (381 aa).

The UMA domain maps to 4-50; sequence LDGVPFKLPKGFVIGTEPLPGPELSVPACGEVLLGSMHDFSLERTAL. Disordered regions lie at residues 87–141 and 185–228; these read LAPA…PGRR and SLCP…LRSH. Residues 95–104 are compositionally biased toward basic and acidic residues; that stretch reads RDPEAGHQER. The span at 105–123 shows a compositional bias: acidic residues; that stretch reads PEEEGEDEAEASSGSEEEP. Residues 124-141 show a composition bias toward low complexity; it reads APSSLQPGSPASPGPGRR. Positions 197 to 216 are enriched in pro residues; the sequence is ASPPGPAPQHPAAPASPPRP.

This Homo sapiens (Human) protein is Ubiquitin-associated protein 1-like (UBAP1L).